The sequence spans 240 residues: 2,3,4,5-tetrahydropyridine-2,6-dicarboxylate N-acetyltransferase (240 aa).

It belongs to the transferase hexapeptide repeat family. DapH subfamily.

The enzyme catalyses (S)-2,3,4,5-tetrahydrodipicolinate + acetyl-CoA + H2O = L-2-acetamido-6-oxoheptanedioate + CoA. It participates in amino-acid biosynthesis; L-lysine biosynthesis via DAP pathway; LL-2,6-diaminopimelate from (S)-tetrahydrodipicolinate (acetylase route): step 1/3. Its function is as follows. Catalyzes the transfer of an acetyl group from acetyl-CoA to tetrahydrodipicolinate. In Bacillus cereus (strain AH187), this protein is 2,3,4,5-tetrahydropyridine-2,6-dicarboxylate N-acetyltransferase.